Here is a 518-residue protein sequence, read N- to C-terminus: G-protein coupled receptor 161 (518 aa).

At 1–26 the chain is on the extracellular side; it reads MNSSSDGANEGAGAAADNGPTKVAES. An N-linked (GlcNAc...) asparagine glycan is attached at N2. The chain crosses the membrane as a helical span at residues 27–47; that stretch reads IAIIIIDILICLGNLVIVVTL. The Cytoplasmic portion of the chain corresponds to 48–59; it reads YKKSYLLSLSNK. The helical transmembrane segment at 60–80 threads the bilayer; it reads FVFSLTFSNLLLSMLVLPFVV. Over 81–97 the chain is Extracellular; that stretch reads VSSILREWIFGVVWCNF. The cysteines at positions 95 and 173 are disulfide-linked. An N-linked (GlcNAc...) asparagine glycan is attached at N96. Residues 98-118 form a helical membrane-spanning segment; sequence SALLYMLISSASMLTLGIIAI. Over 119-138 the chain is Cytoplasmic; it reads DRYYAVLYPMVYPMKITGNR. A helical membrane pass occupies residues 139–159; that stretch reads AVLALVYVWLHSLIGCLPPLF. Residues 160–185 are Extracellular-facing; it reads GWSTLEFDHFKWMCVAAWHKEAGYTA. A helical membrane pass occupies residues 186 to 206; sequence FWQVWCALLPFIVMMICYGFI. At 207 to 264 the chain is on the cytoplasmic side; it reads FRVARIKARKIHCGTVIIVQEASQKNGRKNSSTSTSSSGSRKNGFSSIVYSANQCKAL. Residues 265–285 traverse the membrane as a helical segment; it reads ITILVVIGAFVLTWGPYMIVI. Over 286–301 the chain is Extracellular; the sequence is STEALKGKNSVSPVLE. A helical transmembrane segment spans residues 302 to 322; sequence TLATWLSFTSAICHPLIYGLW. The Cytoplasmic segment spans residues 323–518; it reads NKTVRKELLG…GNIETSKCDV (196 aa). Residues 429–448 form a disordered region; it reads EVEQKNDARTMPTQPTAPSE. Positions 439–448 are enriched in polar residues; it reads MPTQPTAPSE.

The protein belongs to the G-protein coupled receptor 1 family.

It localises to the cell projection. Its subcellular location is the cilium membrane. The protein resides in the cell membrane. Key negative regulator of Shh signaling during neural tube development. Recruited to primary cilia and acts as a regulator of the PKA-dependent basal repression machinery in Shh signaling by increasing cAMP levels, leading to promote the PKA-dependent processing of gli3 into gli3r and repress the Shh signaling. In presence of shh, it is removed from primary cilia, preventing its activity and allowing activation of the Shh signaling. This Xenopus tropicalis (Western clawed frog) protein is G-protein coupled receptor 161 (gpr161).